The following is a 134-amino-acid chain: Probable histone H2A.3 (134 aa).

Belongs to the histone H2A family. As to quaternary structure, the nucleosome is a histone octamer containing two molecules each of H2A, H2B, H3 and H4 assembled in one H3-H4 heterotetramer and two H2A-H2B heterodimers. The octamer wraps approximately 147 bp of DNA.

The protein localises to the nucleus. It is found in the chromosome. Its function is as follows. Core component of nucleosome. Nucleosomes wrap and compact DNA into chromatin, limiting DNA accessibility to the cellular machineries which require DNA as a template. Histones thereby play a central role in transcription regulation, DNA repair, DNA replication and chromosomal stability. DNA accessibility is regulated via a complex set of post-translational modifications of histones, also called histone code, and nucleosome remodeling. In Oryza sativa subsp. indica (Rice), this protein is Probable histone H2A.3.